We begin with the raw amino-acid sequence, 889 residues long: Serine/threonine-protein kinase D3 (889 aa).

Residues S27, S37, S41, and S44 each carry the phosphoserine modification. The Phorbol-ester/DAG-type 1 zinc finger occupies 154 to 204; sequence PHALYVHSYKAPTFCDYCGEMLWGLVRQGLKCEGCGLNYHKRCAFKIPNNC. Residues S213 and S216 each carry the phosphoserine modification. A Phorbol-ester/DAG-type 2 zinc finger spans residues 271-321; that stretch reads PHTFAVHSYGRPTICQYCKRLLKGLFRQGMQCKDCKFNCHKRCASKVPRDC. Residues 336 to 370 form a disordered region; that stretch reads TDADMPMDIDSSDVNSDGSRGLDDSEEPSPPEDKM. Phosphoserine occurs at positions 346, 391, and 395. Residues 416–532 form the PH domain; that stretch reads TVVKEGWMVH…WEKAIRQALM (117 aa). A Phosphotyrosine modification is found at Y426. At S442 the chain carries Phosphoserine. The residue at position 457 (Y457) is a Phosphotyrosine. Position 535 is a phosphothreonine (T535). The residue at position 539 (S539) is a Phosphoserine. A Protein kinase domain is found at 575–831; it reads IFADEVLGSG…VDKSLSHPWL (257 aa). ATP-binding positions include 581–589 and K604; that span reads LGSGQFGIV. D698 acts as the Proton acceptor in catalysis. S730 carries the post-translational modification Phosphoserine; by PKC. Residue S734 is modified to Phosphoserine; by autocatalysis. Y741 carries the phosphotyrosine modification.

This sequence belongs to the protein kinase superfamily. CAMK Ser/Thr protein kinase family. PKD subfamily. It depends on Mg(2+) as a cofactor.

It localises to the cytoplasm. The protein localises to the membrane. It catalyses the reaction L-seryl-[protein] + ATP = O-phospho-L-seryl-[protein] + ADP + H(+). The catalysed reaction is L-threonyl-[protein] + ATP = O-phospho-L-threonyl-[protein] + ADP + H(+). Its activity is regulated as follows. Activated by DAG and phorbol esters. Phorbol-ester/DAG-type domains 1 and 2 bind both DAG and phorbol ester with high affinity and mediate translocation to the cell membrane. Autophosphorylation of Ser-734 and phosphorylation of Ser-730 by PKC relieves auto-inhibition by the PH domain. Converts transient diacylglycerol (DAG) signals into prolonged physiological effects, downstream of PKC. Involved in resistance to oxidative stress. This chain is Serine/threonine-protein kinase D3 (Prkd3), found in Mus musculus (Mouse).